The following is a 163-amino-acid chain: Photosystem II extrinsic protein V (163 aa).

Residues 1–26 (MFRRLIGVVVATVLLSFQLLVGSATA) form the signal peptide. Heme c-binding residues include cysteine 63, cysteine 66, histidine 67, and histidine 118.

It belongs to the cytochrome c family. PsbV subfamily. As to quaternary structure, PSII is composed of 1 copy each of membrane proteins PsbA, PsbB, PsbC, PsbD, PsbE, PsbF, PsbH, PsbI, PsbJ, PsbK, PsbL, PsbM, PsbT, PsbX, PsbY, PsbZ, Psb30/Ycf12, peripheral proteins PsbO, CyanoQ (PsbQ), PsbU, PsbV and a large number of cofactors. It forms dimeric complexes. Requires heme c as cofactor.

The protein localises to the cellular thylakoid membrane. Its function is as follows. One of the extrinsic, lumenal subunits of photosystem II (PSII). PSII is a light-driven water plastoquinone oxidoreductase, using light energy to abstract electrons from H(2)O, generating a proton gradient subsequently used for ATP formation. The extrinsic proteins stabilize the structure of photosystem II oxygen-evolving complex (OEC), the ion environment of oxygen evolution and protect the OEC against heat-induced inactivation. Low-potential cytochrome c that plays a role in the OEC of PSII. The polypeptide is Photosystem II extrinsic protein V (Nostoc punctiforme (strain ATCC 29133 / PCC 73102)).